The chain runs to 70 residues: uncharacterized protein (70 aa).

The helical transmembrane segment at 15-37 (IFAFLLFRLCKFCCVFCCALCNV) threads the bilayer.

It is found in the membrane. This is an uncharacterized protein from Dictyostelium discoideum (Social amoeba).